An 856-amino-acid chain; its full sequence is DNA mismatch repair protein MutS (856 aa).

618–625 (GPNMGGKS) contributes to the ATP binding site.

Belongs to the DNA mismatch repair MutS family.

This protein is involved in the repair of mismatches in DNA. It is possible that it carries out the mismatch recognition step. This protein has a weak ATPase activity. This is DNA mismatch repair protein MutS from Shewanella baltica (strain OS195).